Reading from the N-terminus, the 649-residue chain is Threonine--tRNA ligase (649 aa).

In terms of domain architecture, TGS spans M1–T60. Residues D248–P544 are catalytic. Positions 341, 392, and 521 each coordinate Zn(2+).

It belongs to the class-II aminoacyl-tRNA synthetase family. As to quaternary structure, homodimer. The cofactor is Zn(2+).

It localises to the cytoplasm. The catalysed reaction is tRNA(Thr) + L-threonine + ATP = L-threonyl-tRNA(Thr) + AMP + diphosphate + H(+). In terms of biological role, catalyzes the attachment of threonine to tRNA(Thr) in a two-step reaction: L-threonine is first activated by ATP to form Thr-AMP and then transferred to the acceptor end of tRNA(Thr). Also edits incorrectly charged L-seryl-tRNA(Thr). In Deinococcus geothermalis (strain DSM 11300 / CIP 105573 / AG-3a), this protein is Threonine--tRNA ligase.